Here is a 624-residue protein sequence, read N- to C-terminus: MACYIYQLPSWVLDDLCRNIDTLSEWDWMQFASYVITDLTQLRKIKSMERVQGVSITRELLWWWSMRQATVQQLVDLLCHLELYRAAQIVLSWKPAPDSLSPLSAFPEAVKPGPVATSGRNLKDDQKKGQPVKPCSFLSSGTTMAGAQQQASCQRPCEEDAPCSLKTDVPDSLQSKYCSTSIPKQEKLLNLPGDRLFWSEADIVQATEDFDQSHRISEGTFADIYRGQRNGVAFAFKRLREVTGSSPGSMDRFLQAEMQLCLRCCHPNILPLLGFCTGRQFHSLIYPYMANGSLQDRLWAQGDSDMLSWPQRASICSGLLLAVEHLHSLDIIHSNVKSANVLLDQHLNPKLAHPVAHPCPTNKKTKYTVMKTHLFQASAAYLPENFIRVGQLTKQVDIFSCGIVLAEVLTGIPAMDKDRSPVYLKDLLLSEIPSNTSSVHSRKTSMGKVVVKEICQKHLERKAGLLPEACAETWATAVSVCLRRREASLEEARVSMAGVEEQLRGQLSLPWSRVSEDTGSSSNTPEETDDVDNSSLSVPSSVMVVSCARVSSPPPSMGNGTAQPSTSGRQEADSSSEACAGPQPPQEATETSWKIEINEAKRRLMENILLYKEEKLDSVELFGP.

The region spanning 13–94 is the Death domain; that stretch reads LDDLCRNIDT…RAAQIVLSWK (82 aa). In terms of domain architecture, Protein kinase spans 210–475; the sequence is FDQSHRISEG…LPEACAETWA (266 aa). ATP-binding positions include 216 to 224, lysine 237, and 337 to 340; these read ISEGTFADI and KSAN. Disordered stretches follow at residues 508–536 and 549–593; these read SLPW…NSSL and RVSS…ETSW. Residues 558–577 are compositionally biased toward polar residues; the sequence is GNGTAQPSTSGRQEADSSSE.

It belongs to the protein kinase superfamily. TKL Ser/Thr protein kinase family. Pelle subfamily. In terms of assembly, interacts with MYD88. IL-1 stimulation leads to the formation of a signaling complex which dissociates from the IL-1 receptor following the binding of PELI1.

Its function is as follows. Binds to the IL-1 type I receptor following IL-1 engagement, triggering intracellular signaling cascades leading to transcriptional up-regulation and mRNA stabilization. In Rattus norvegicus (Rat), this protein is Interleukin-1 receptor-associated kinase-like 2 (Irak2).